Reading from the N-terminus, the 28-residue chain is Palustrin-1a (28 aa).

A disulfide bridge connects residues Cys22 and Cys28.

As to expression, expressed by the skin glands.

It localises to the secreted. Functionally, antimicrobial activity against Gram-negative bacterium E.coli. In Lithobates palustris (Pickerel frog), this protein is Palustrin-1a.